The sequence spans 358 residues: G-protein coupled receptor 20 (358 aa).

The Extracellular portion of the chain corresponds to 1–48 (MPSVSPAGPSAGAVPNATAVTTVRTNASGLEVPLFHLFARLDEELHGT). 2 N-linked (GlcNAc...) asparagine glycosylation sites follow: Asn16 and Asn26. Residues 49–69 (FPGLWLALMAVHGAIFLAGLV) traverse the membrane as a helical segment. Topologically, residues 70-86 (LNGLALYVFCCRTRAKT) are cytoplasmic. A helical transmembrane segment spans residues 87 to 107 (PSVIYTINLVVTDLLVGLSLP). Topologically, residues 108 to 125 (TRFAVYYGARGCLRCAFP) are extracellular. The helical transmembrane segment at 126-146 (HVLGYFLNMHCSILFLTCICV) threads the bilayer. Topologically, residues 147–168 (DRYLAIVRPEGSRRCRQPACAR) are cytoplasmic. The chain crosses the membrane as a helical span at residues 169–189 (AVCAFVWLAAGAVTLSVLGVT). Over 190-196 (GSRPCCR) the chain is Extracellular. A helical membrane pass occupies residues 197 to 217 (VFALTVLEFLLPLLVISVFTG). Residues 218–238 (RIMCALSRPGLLHQGRQRRVR) are Cytoplasmic-facing. A helical transmembrane segment spans residues 239-259 (AMQLLLTVLIIFLVCFTPFHA). The Extracellular portion of the chain corresponds to 260-275 (RQVAVALWPDMPHHTS). A helical transmembrane segment spans residues 276–296 (LVVYHVAVTLSSLNSCMDPIV). Topologically, residues 297-358 (YCFVTSGFQA…TQALANGPEA (62 aa)) are cytoplasmic. The segment at 315 to 339 (HGEREPSSGDVVSMHRSSKGSGRHH) is disordered. The segment covering 330–339 (RSSKGSGRHH) has biased composition (basic residues).

This sequence belongs to the G-protein coupled receptor 1 family. As to expression, ubiquitous with highest levels in intestinal tissues. In the brain detected in thalamus, putamen, and caudate, but not in frontal cortex, pons and hypothalamus.

The protein localises to the cell membrane. Its function is as follows. Orphan receptor with constitutive G(i) signaling activity that activate cyclic AMP. This is G-protein coupled receptor 20 (GPR20) from Homo sapiens (Human).